Here is a 505-residue protein sequence, read N- to C-terminus: ATP synthase subunit alpha, chloroplastic (505 aa).

ATP is bound at residue 170 to 177 (GDRQTGKT).

This sequence belongs to the ATPase alpha/beta chains family. As to quaternary structure, F-type ATPases have 2 components, CF(1) - the catalytic core - and CF(0) - the membrane proton channel. CF(1) has five subunits: alpha(3), beta(3), gamma(1), delta(1), epsilon(1). CF(0) has four main subunits: a, b, b' and c.

Its subcellular location is the plastid. It is found in the chloroplast thylakoid membrane. The catalysed reaction is ATP + H2O + 4 H(+)(in) = ADP + phosphate + 5 H(+)(out). Functionally, produces ATP from ADP in the presence of a proton gradient across the membrane. The alpha chain is a regulatory subunit. The chain is ATP synthase subunit alpha, chloroplastic from Carica papaya (Papaya).